A 679-amino-acid polypeptide reads, in one-letter code: Glycine--tRNA ligase beta subunit (679 aa).

This sequence belongs to the class-II aminoacyl-tRNA synthetase family. Tetramer of two alpha and two beta subunits.

The protein localises to the cytoplasm. The catalysed reaction is tRNA(Gly) + glycine + ATP = glycyl-tRNA(Gly) + AMP + diphosphate. The protein is Glycine--tRNA ligase beta subunit (glyS) of Bacillus subtilis (strain 168).